The chain runs to 122 residues: Neuropeptide B (122 aa).

The first 24 residues, 1–24, serve as a signal peptide directing secretion; it reads MAGPAMLVAAALALCLLLASPGLA. Trp-25 is subject to 6'-bromotryptophan. A propeptide spanning residues 56 to 122 is cleaved from the precursor; it reads SEPRGGTRSL…LSLSASDCRK (67 aa).

It belongs to the neuropeptide B/W family.

The protein resides in the secreted. Functionally, may be involved in the regulation of feeding, neuroendocrine system, memory, learning and in the afferent pain pathway. This Bos taurus (Bovine) protein is Neuropeptide B (NPB).